A 428-amino-acid chain; its full sequence is Phosphomethylpyrimidine synthase 1 (428 aa).

Substrate contacts are provided by residues Met94, Tyr123, His162, 184–186, 225–228, and Glu264; these read SRG and NGMR. His268 serves as a coordination point for Zn(2+). Tyr291 contributes to the substrate binding site. His332 is a binding site for Zn(2+). [4Fe-4S] cluster is bound by residues Cys408, Cys411, and Cys415.

The protein belongs to the ThiC family. It depends on [4Fe-4S] cluster as a cofactor.

It catalyses the reaction 5-amino-1-(5-phospho-beta-D-ribosyl)imidazole + S-adenosyl-L-methionine = 4-amino-2-methyl-5-(phosphooxymethyl)pyrimidine + CO + 5'-deoxyadenosine + formate + L-methionine + 3 H(+). It participates in cofactor biosynthesis; thiamine diphosphate biosynthesis. Its function is as follows. Catalyzes the synthesis of the hydroxymethylpyrimidine phosphate (HMP-P) moiety of thiamine from aminoimidazole ribotide (AIR) in a radical S-adenosyl-L-methionine (SAM)-dependent reaction. The polypeptide is Phosphomethylpyrimidine synthase 1 (Methanosarcina barkeri (strain Fusaro / DSM 804)).